Reading from the N-terminus, the 426-residue chain is Lipoyl synthase, mitochondrial (426 aa).

A mitochondrion-targeting transit peptide spans 1 to 29 (MASPAPLQRLQAPLRRSLARAAVLSSRTY). The segment covering 27–42 (RTYATIPSPSDPGLTQ) has biased composition (polar residues). The interval 27 to 61 (RTYATIPSPSDPGLTQSSPSPAASTTPAKKAPRPS) is disordered. Residues 43–55 (SSPSPAASTTPAK) are compositionally biased toward low complexity. [4Fe-4S] cluster is bound by residues Cys140, Cys145, Cys151, Cys171, Cys175, Cys178, and Ser388. The 224-residue stretch at 154–377 (GNDKSAATAT…KQRALDMGFL (224 aa)) folds into the Radical SAM core domain.

It belongs to the radical SAM superfamily. Lipoyl synthase family. Requires [4Fe-4S] cluster as cofactor.

Its subcellular location is the mitochondrion. It carries out the reaction [[Fe-S] cluster scaffold protein carrying a second [4Fe-4S](2+) cluster] + N(6)-octanoyl-L-lysyl-[protein] + 2 oxidized [2Fe-2S]-[ferredoxin] + 2 S-adenosyl-L-methionine + 4 H(+) = [[Fe-S] cluster scaffold protein] + N(6)-[(R)-dihydrolipoyl]-L-lysyl-[protein] + 4 Fe(3+) + 2 hydrogen sulfide + 2 5'-deoxyadenosine + 2 L-methionine + 2 reduced [2Fe-2S]-[ferredoxin]. Its pathway is protein modification; protein lipoylation via endogenous pathway; protein N(6)-(lipoyl)lysine from octanoyl-[acyl-carrier-protein]: step 2/2. In terms of biological role, catalyzes the radical-mediated insertion of two sulfur atoms into the C-6 and C-8 positions of the octanoyl moiety bound to the lipoyl domains of lipoate-dependent enzymes, thereby converting the octanoylated domains into lipoylated derivatives. The chain is Lipoyl synthase, mitochondrial from Podospora anserina (strain S / ATCC MYA-4624 / DSM 980 / FGSC 10383) (Pleurage anserina).